The chain runs to 457 residues: Argininosuccinate lyase (457 aa).

The protein belongs to the lyase 1 family. Argininosuccinate lyase subfamily.

The protein localises to the cytoplasm. The catalysed reaction is 2-(N(omega)-L-arginino)succinate = fumarate + L-arginine. Its pathway is amino-acid biosynthesis; L-arginine biosynthesis; L-arginine from L-ornithine and carbamoyl phosphate: step 3/3. This chain is Argininosuccinate lyase, found in Escherichia coli O139:H28 (strain E24377A / ETEC).